Here is a 147-residue protein sequence, read N- to C-terminus: Hemoglobin subunit beta-2 (147 aa).

The 145-residue stretch at 3-147 folds into the Globin domain; the sequence is EWTDEERTII…VVSALGRQYH (145 aa). Positions 64 and 93 each coordinate heme b.

This sequence belongs to the globin family. Hb 2 is a heterotetramer of two alpha-2 and two beta-2 chains. Hb 3 is a heterotetramer of two alpha-1 and two beta-2 chains. In terms of tissue distribution, red blood cells.

Its function is as follows. Involved in oxygen transport from gills to the various peripheral tissues. The polypeptide is Hemoglobin subunit beta-2 (hbb2) (Gadus morhua (Atlantic cod)).